Consider the following 302-residue polypeptide: Vomeronasal type-1 receptor 48 (302 aa).

At 1-16 (MNENSRLHTHSNIRNT) the chain is on the extracellular side. A helical transmembrane segment spans residues 17-37 (FFSEIGIGISGNSFLLLFHII). Over 38–49 (KFFRGHRPRLTD) the chain is Cytoplasmic. The helical transmembrane segment at 50-70 (LPIGLLSLIHLLMLLVAAVIA) threads the bilayer. At 71–91 (TDIFISWRGWNDIICKFLVYL) the chain is on the extracellular side. The cysteines at positions 85 and 172 are disulfide-linked. Residues 92-114 (YRSLRGLSLCTTSMLSVLQAIIL) form a helical membrane-spanning segment. Over 115 to 131 (SPRSYCLAKFKRKSSHN) the chain is Cytoplasmic. A helical transmembrane segment spans residues 132 to 152 (ISCAIIFLSVLYMSISSHLLI). The Extracellular portion of the chain corresponds to 153–193 (SITATPNLTMNDFLYVSQSCSLLPLSYLMQSIYSTLLVLRE). Asn-159 is a glycosylation site (N-linked (GlcNAc...) asparagine). A helical membrane pass occupies residues 194–214 (VFLIGLMVLSTSYMVALLYMH). The Cytoplasmic segment spans residues 215–238 (RKQAQNLQGTSLSLKASAEQRATQ). Residues 239–259 (TILMLMTFFVLMSIFDSIVSC) traverse the membrane as a helical segment. Residues 260–269 (SRTMFLDDPT) are Extracellular-facing. The helical transmembrane segment at 270–290 (SYSIHIFVMHIYATVSPFVFI) threads the bilayer. The Cytoplasmic segment spans residues 291–302 (STEKHIVNILRG).

Belongs to the G-protein coupled receptor 1 family.

The protein resides in the cell membrane. Putative pheromone receptor implicated in the regulation of social and reproductive behavior. This is Vomeronasal type-1 receptor 48 (Vmn1r48) from Mus musculus (Mouse).